A 375-amino-acid polypeptide reads, in one-letter code: F-box/kelch-repeat protein At4g39240 (375 aa).

Over residues 1 to 15 (MPFSAASSSSVSSIA) the composition is skewed to low complexity. The disordered stretch occupies residues 1-27 (MPFSAASSSSVSSIAEEPPPKKQHDPS). Positions 31–77 (SSYLLLLPDEIILNCLARLPKCYYPVISLVSKTFRRLIASPEIYVER) constitute an F-box domain. Kelch repeat units lie at residues 140-186 (EIYV…FFDG), 187-232 (KLYV…RSFA), and 275-321 (KIYT…GNLA).

This chain is F-box/kelch-repeat protein At4g39240, found in Arabidopsis thaliana (Mouse-ear cress).